A 592-amino-acid chain; its full sequence is MKRSEESTSTQSPEEQTGTLHCWRCRKCIASSGCFMTPLETQVVEQDRHESVDAQNTCHLWHMNVDALPEWISCLLQKAQWTVGKLNCPFCGARLGGFNFVSTPKCSCGQLAAVHLCKSRTDHQAAQGGRLMRPALKHLPHPGVPSGCDKETLLTGGGSKTRNHWLLSMARNSNGLGRLTEALCLEVRATYFEMKNEKLLFKASDPKCQPFVPQPDTGRCPSRASHRKSHSLDLNISEKLILLPTLYEIHRKPTAYPRLNETGPIDLSGLALPCSNSSCSFQSPPSFDPNMLLHRLSVAPHETQAQRGRECQCGLEASSVYSDHANANSLPFLMDLPSAGRSVLEASDQEEHLSQLDFLRSASFPLGTINHRLNNRERSKLRTLRRQQRRERWLQKQGKYSGVGLLDHMTVSNEMSTDEETEFPEEKDSYMCAVCLDVYFNPYMCYPCHHIFCEPCLRTLAKDNPASTPCPLCRTIISRVFLQTELNNATKTFFTKEYLKIKQSFQKSSSAKWPLPSCRKGFHLFGGFHRRAAPVTRRQFPHGAHRMDYLHFEDDSRGWWFDMDMVIIYIYSVNWVIGFVVFCFLCYFFFPF.

The Cytoplasmic portion of the chain corresponds to 1–564; the sequence is MKRSEESTST…DSRGWWFDMD (564 aa). Residue Ser231 is modified to Phosphoserine. Residues 282–489 form an interaction with ZIC2 region; it reads QSPPSFDPNM…VFLQTELNNA (208 aa). The RING-type zinc finger occupies 432–474; that stretch reads CAVCLDVYFNPYMCYPCHHIFCEPCLRTLAKDNPASTPCPLCR. The helical transmembrane segment at 565–585 threads the bilayer; that stretch reads MVIIYIYSVNWVIGFVVFCFL. At 586-592 the chain is on the extracellular side; it reads CYFFFPF.

Interacts with ZIC2. Brain, kidney, testis and uterus. membrane protein. Nucleus envelope.

Its subcellular location is the endoplasmic reticulum membrane. The protein localises to the nucleus envelope. It carries out the reaction S-ubiquitinyl-[E2 ubiquitin-conjugating enzyme]-L-cysteine + [acceptor protein]-L-lysine = [E2 ubiquitin-conjugating enzyme]-L-cysteine + N(6)-ubiquitinyl-[acceptor protein]-L-lysine.. The protein operates within protein modification; protein ubiquitination. In terms of biological role, E3 ubiquitin-protein ligase which promotes polyubiquitination and degradation by the proteasome pathway of ZIC2. This is E3 ubiquitin-protein ligase RNF180 (Rnf180) from Mus musculus (Mouse).